The chain runs to 532 residues: O-phosphoserine--tRNA(Cys) ligase (532 aa).

Residues His186 to Thr188, Ser231 to Ser233, Tyr273 to Tyr274, and Asn317 each bind substrate.

Belongs to the class-II aminoacyl-tRNA synthetase family. O-phosphoseryl-tRNA(Cys) synthetase subfamily. As to quaternary structure, homotetramer. Interacts with SepCysS.

The catalysed reaction is tRNA(Cys) + O-phospho-L-serine + ATP = O-phospho-L-seryl-tRNA(Cys) + AMP + diphosphate. Its function is as follows. Catalyzes the attachment of O-phosphoserine (Sep) to tRNA(Cys). The polypeptide is O-phosphoserine--tRNA(Cys) ligase (Methanothermobacter thermautotrophicus (strain ATCC 29096 / DSM 1053 / JCM 10044 / NBRC 100330 / Delta H) (Methanobacterium thermoautotrophicum)).